Reading from the N-terminus, the 61-residue chain is Small ribosomal subunit protein uS14 (61 aa).

Positions 24, 27, 40, and 43 each coordinate Zn(2+).

It belongs to the universal ribosomal protein uS14 family. Zinc-binding uS14 subfamily. In terms of assembly, part of the 30S ribosomal subunit. Contacts proteins S3 and S10. Zn(2+) is required as a cofactor.

Its function is as follows. Binds 16S rRNA, required for the assembly of 30S particles and may also be responsible for determining the conformation of the 16S rRNA at the A site. This Treponema pallidum (strain Nichols) protein is Small ribosomal subunit protein uS14.